Reading from the N-terminus, the 427-residue chain is Enolase 1 (427 aa).

Residue Q162 coordinates (2R)-2-phosphoglycerate. The Proton donor role is filled by E204. D241, E285, and D312 together coordinate Mg(2+). Residues K337, R366, S367, and K388 each contribute to the (2R)-2-phosphoglycerate site. Catalysis depends on K337, which acts as the Proton acceptor.

This sequence belongs to the enolase family. Mg(2+) is required as a cofactor.

It localises to the cytoplasm. Its subcellular location is the secreted. The protein localises to the cell surface. The enzyme catalyses (2R)-2-phosphoglycerate = phosphoenolpyruvate + H2O. Its pathway is carbohydrate degradation; glycolysis; pyruvate from D-glyceraldehyde 3-phosphate: step 4/5. Its function is as follows. Catalyzes the reversible conversion of 2-phosphoglycerate (2-PG) into phosphoenolpyruvate (PEP). It is essential for the degradation of carbohydrates via glycolysis. In Chlorobaculum tepidum (strain ATCC 49652 / DSM 12025 / NBRC 103806 / TLS) (Chlorobium tepidum), this protein is Enolase 1.